A 238-amino-acid polypeptide reads, in one-letter code: MQKPKYKRIVLKLSGEALAGHNTYGIDNEVLNSIARQVVEVVRQEVQVAIVVGGGNIWRGVAGSAKGMDRATADYMGMLATVINALALQDALEQEGMGTRVMSAIEMKEVCEPYIRRRAIRHLEKGRVTIFAAGTGNPYFSTDTAAALRSAEIEAEVILMAKKVDGVYDADPVKNPAALKFDRLNYIDVLSRGLGVMDSTAASLCMDNGIPIIVFDLTREGNILKAVLGEEIGTYVGR.

ATP is bound at residue 12-15 (KLSG). Glycine 54 is a binding site for UMP. Residues glycine 55 and arginine 59 each coordinate ATP. UMP-binding positions include aspartate 74 and 135-142 (TGNPYFST). Residues tyrosine 168 and aspartate 171 each coordinate ATP.

This sequence belongs to the UMP kinase family. Homohexamer.

Its subcellular location is the cytoplasm. The enzyme catalyses UMP + ATP = UDP + ADP. It functions in the pathway pyrimidine metabolism; CTP biosynthesis via de novo pathway; UDP from UMP (UMPK route): step 1/1. Inhibited by UTP. Its function is as follows. Catalyzes the reversible phosphorylation of UMP to UDP. This is Uridylate kinase from Syntrophomonas wolfei subsp. wolfei (strain DSM 2245B / Goettingen).